The primary structure comprises 123 residues: MARLIGVDLPRDKRLEVALTYIYGIGRTRATETLKATGISGDLRVHELTDDQLVALRDHIEANYHVEGDLRREVAADIRRKIEIGTYQGRRHRSGLPVRGQRTRTNARTRKGKRKAVAKKKAK.

The disordered stretch occupies residues 89 to 123; sequence GRRHRSGLPVRGQRTRTNARTRKGKRKAVAKKKAK. Residues 101–123 show a composition bias toward basic residues; it reads QRTRTNARTRKGKRKAVAKKKAK.

Belongs to the universal ribosomal protein uS13 family. As to quaternary structure, part of the 30S ribosomal subunit. Forms a loose heterodimer with protein S19. Forms two bridges to the 50S subunit in the 70S ribosome.

Located at the top of the head of the 30S subunit, it contacts several helices of the 16S rRNA. In the 70S ribosome it contacts the 23S rRNA (bridge B1a) and protein L5 of the 50S subunit (bridge B1b), connecting the 2 subunits; these bridges are implicated in subunit movement. Contacts the tRNAs in the A and P-sites. The protein is Small ribosomal subunit protein uS13 of Cutibacterium acnes (strain DSM 16379 / KPA171202) (Propionibacterium acnes).